The sequence spans 203 residues: ATP-dependent Clp protease proteolytic subunit (203 aa).

Ser-101 (nucleophile) is an active-site residue. Residue His-126 is part of the active site.

The protein belongs to the peptidase S14 family. Component of the chloroplastic Clp protease core complex.

The protein localises to the plastid. Its subcellular location is the chloroplast stroma. It catalyses the reaction Hydrolysis of proteins to small peptides in the presence of ATP and magnesium. alpha-casein is the usual test substrate. In the absence of ATP, only oligopeptides shorter than five residues are hydrolyzed (such as succinyl-Leu-Tyr-|-NHMec, and Leu-Tyr-Leu-|-Tyr-Trp, in which cleavage of the -Tyr-|-Leu- and -Tyr-|-Trp bonds also occurs).. Functionally, cleaves peptides in various proteins in a process that requires ATP hydrolysis. Has a chymotrypsin-like activity. Plays a major role in the degradation of misfolded proteins. The chain is ATP-dependent Clp protease proteolytic subunit from Marchantia polymorpha (Common liverwort).